Consider the following 172-residue polypeptide: Small ribosomal subunit protein uS5 (172 aa).

The S5 DRBM domain occupies 16–79 (LKDRLVAINR…EAAKKNLIRV (64 aa)).

It belongs to the universal ribosomal protein uS5 family. As to quaternary structure, part of the 30S ribosomal subunit. Contacts proteins S4 and S8.

With S4 and S12 plays an important role in translational accuracy. In terms of biological role, located at the back of the 30S subunit body where it stabilizes the conformation of the head with respect to the body. In Porphyromonas gingivalis (strain ATCC BAA-308 / W83), this protein is Small ribosomal subunit protein uS5.